A 187-amino-acid chain; its full sequence is ATP synthase subunit b, chloroplastic (187 aa).

Residues leucine 29 to leucine 49 form a helical membrane-spanning segment.

This sequence belongs to the ATPase B chain family. As to quaternary structure, F-type ATPases have 2 components, F(1) - the catalytic core - and F(0) - the membrane proton channel. F(1) has five subunits: alpha(3), beta(3), gamma(1), delta(1), epsilon(1). F(0) has four main subunits: a(1), b(1), b'(1) and c(10-14). The alpha and beta chains form an alternating ring which encloses part of the gamma chain. F(1) is attached to F(0) by a central stalk formed by the gamma and epsilon chains, while a peripheral stalk is formed by the delta, b and b' chains.

It localises to the plastid. The protein localises to the chloroplast thylakoid membrane. F(1)F(0) ATP synthase produces ATP from ADP in the presence of a proton or sodium gradient. F-type ATPases consist of two structural domains, F(1) containing the extramembraneous catalytic core and F(0) containing the membrane proton channel, linked together by a central stalk and a peripheral stalk. During catalysis, ATP synthesis in the catalytic domain of F(1) is coupled via a rotary mechanism of the central stalk subunits to proton translocation. In terms of biological role, component of the F(0) channel, it forms part of the peripheral stalk, linking F(1) to F(0). The chain is ATP synthase subunit b, chloroplastic from Angiopteris evecta (Mule's foot fern).